Consider the following 179-residue polypeptide: Large ribosomal subunit protein uL5 (179 aa).

Belongs to the universal ribosomal protein uL5 family. In terms of assembly, part of the 50S ribosomal subunit; part of the 5S rRNA/L5/L18/L25 subcomplex. Contacts the 5S rRNA and the P site tRNA. Forms a bridge to the 30S subunit in the 70S ribosome.

In terms of biological role, this is one of the proteins that bind and probably mediate the attachment of the 5S RNA into the large ribosomal subunit, where it forms part of the central protuberance. In the 70S ribosome it contacts protein S13 of the 30S subunit (bridge B1b), connecting the 2 subunits; this bridge is implicated in subunit movement. Contacts the P site tRNA; the 5S rRNA and some of its associated proteins might help stabilize positioning of ribosome-bound tRNAs. This Idiomarina loihiensis (strain ATCC BAA-735 / DSM 15497 / L2-TR) protein is Large ribosomal subunit protein uL5.